We begin with the raw amino-acid sequence, 376 residues long: 3-aminomethylindole N-methyltransferase (376 aa).

Gly-220, Asp-243, Asp-263, and Met-264 together coordinate S-adenosyl-L-homocysteine.

It belongs to the class I-like SAM-binding methyltransferase superfamily. Cation-independent O-methyltransferase family. As to expression, more present in the fifth leaf than in the second leaf (at protein level).

The catalysed reaction is 3-(aminomethyl)indole + 2 S-adenosyl-L-methionine = gramine + 2 S-adenosyl-L-homocysteine + 2 H(+). The protein operates within alkaloid biosynthesis. Its activity is regulated as follows. Repressed by sodium carbonate, sodium bicarbonate and K-phosphate. Its function is as follows. Methylates 3-aminomethylindole (AMI) and N-methyl-3-aminomethylindole (MAMI), two substrates involved in gramine biosynthesis, a toxic indole alkaloid. Can use S-adenosyl-L-methionine (AdoMet) as a methyl donor. Unable to mediate caffeic acid O-methylation. In Hordeum vulgare subsp. vulgare (Domesticated barley), this protein is 3-aminomethylindole N-methyltransferase.